A 102-amino-acid chain; its full sequence is RNA-binding protein Hfq (102 aa).

In terms of domain architecture, Sm spans 9–68 (DPFLNALRRERVPVSIYLVNGIKLQGQIESFDQFVILLKNTVSQMVYKHAISTVVPSRPV). The interval 63 to 102 (VPSRPVSHHSNNAGGGSNNYHHSNNAQPSSAASQDSEDAE) is disordered. A compositionally biased stretch (low complexity) spans 70–96 (HHSNNAGGGSNNYHHSNNAQPSSAASQ).

It belongs to the Hfq family. As to quaternary structure, homohexamer.

Functionally, RNA chaperone that binds small regulatory RNA (sRNAs) and mRNAs to facilitate mRNA translational regulation in response to envelope stress, environmental stress and changes in metabolite concentrations. Also binds with high specificity to tRNAs. The polypeptide is RNA-binding protein Hfq (Cronobacter sakazakii (strain ATCC BAA-894) (Enterobacter sakazakii)).